Here is a 305-residue protein sequence, read N- to C-terminus: 4-diphosphocytidyl-2-C-methyl-D-erythritol kinase (305 aa).

K15 is a catalytic residue. 99-109 (PMGGGIGGGSS) contributes to the ATP binding site. D141 is a catalytic residue.

It belongs to the GHMP kinase family. IspE subfamily.

The enzyme catalyses 4-CDP-2-C-methyl-D-erythritol + ATP = 4-CDP-2-C-methyl-D-erythritol 2-phosphate + ADP + H(+). The protein operates within isoprenoid biosynthesis; isopentenyl diphosphate biosynthesis via DXP pathway; isopentenyl diphosphate from 1-deoxy-D-xylulose 5-phosphate: step 3/6. Its function is as follows. Catalyzes the phosphorylation of the position 2 hydroxy group of 4-diphosphocytidyl-2C-methyl-D-erythritol. This is 4-diphosphocytidyl-2-C-methyl-D-erythritol kinase from Marinomonas sp. (strain MWYL1).